The primary structure comprises 176 residues: Tubulin polymerization-promoting protein family member 3 (176 aa).

An N-acetylalanine modification is found at alanine 2.

This sequence belongs to the TPPP family.

The protein localises to the cytoplasm. Its subcellular location is the cytoskeleton. In terms of biological role, regulator of microtubule dynamic that has microtubule bundling activity. Required for embryo implantation; possibly by regulating beta-catenin. Also required for decidualization via regulation of beta-catenin. The sequence is that of Tubulin polymerization-promoting protein family member 3 (Tppp3) from Rattus norvegicus (Rat).